A 523-amino-acid chain; its full sequence is Excitatory amino acid transporter 3 (523 aa).

At 1-18 (MGKPTSSGCDWRRFLRNH) the chain is on the cytoplasmic side. The chain crosses the membrane as a helical span at residues 19 to 38 (WLLLSTVAAVVLGIVLGVVV). Topologically, residues 39–61 (RGHSELSNLDKFYFAFPGEILMR) are extracellular. A helical membrane pass occupies residues 62-82 (MLKLVILPLIVSSMITGVAAL). Topologically, residues 83 to 93 (DSNVSGKIGLR) are cytoplasmic. Residues 94–114 (AVVYYFSTTVIAVILGIVLVV) traverse the membrane as a helical segment. Positions 98, 101, and 102 each coordinate Na(+). Over 115–204 (SIKPGVTQKV…KTKEYKIVGL (90 aa)) the chain is Extracellular. N-linked (GlcNAc...) asparagine glycans are attached at residues Asn128, Asn178, and Asn194. The helical transmembrane segment at 205 to 228 (YSDGINVLGLIIFCLVFGLVIGKM) threads the bilayer. The Cytoplasmic portion of the chain corresponds to 229-237 (GEKGQILVD). The chain crosses the membrane as a helical span at residues 238 to 265 (FFNALSDATMKIVQIIMCYMPIGILFLI). The Extracellular segment spans residues 266-285 (AGKIIEVEDWEIFRKLGLYM). A helical transmembrane segment spans residues 286-307 (ATVLSGLAIHSLIVLPLLYFIV). The Cytoplasmic segment spans residues 308-312 (VRKNP). The segment at residues 313 to 343 (FRFALGMAQALLTALMISSSSATLPVTFRCA) is an intramembrane region (discontinuously helical). Ser330 and Ser332 together coordinate L-aspartate. Residues 344–352 (EEKNQVDKR) lie on the Cytoplasmic side of the membrane. The helical transmembrane segment at 353 to 379 (ITRFVLPVGATINMDGTALYEAVAAVF) threads the bilayer. Positions 361, 363, 365, and 367 each coordinate Na(+). Residue Thr369 participates in L-aspartate binding. The Extracellular portion of the chain corresponds to 380 to 392 (IAQLNGLDLSIGQ). An intramembrane region (discontinuously helical) is located at residues 393–426 (IVTISITATAASIGAAGVPQAGLVTMVIVLSAVG). Na(+) contacts are provided by Ser404, Ile405, and Ala407. Val410 is a binding site for L-aspartate. Residues 427-439 (LPAEDVTLIIAVD) lie on the Extracellular side of the membrane. Residues 440 to 461 (WLLDRFRTMVNVLGDAFGTGIV) traverse the membrane as a helical segment. L-aspartate is bound by residues Arg446, Thr447, and Asn450. Na(+) contacts are provided by Asn450 and Asp454. The Cytoplasmic portion of the chain corresponds to 462–523 (EKLSKKELEQ…TISFTQTSQF (62 aa)). 2 positions are modified to phosphoserine: Ser516 and Ser521.

It belongs to the dicarboxylate/amino acid:cation symporter (DAACS) (TC 2.A.23) family. SLC1A1 subfamily. Homotrimer. Interacts with ARL6IP5. Interacts with RTN2 (via N-terminus); the interaction promotes cell surface expression of SLC1A1. Interacts with SORCS2; this interaction is important for normal expression at the cell membrane. As to expression, detected on neurons in the brain cortex, dentate gyrus and hippocampus CA2 region (at protein level). Expressed in whole brain, brain cortex, hippocampus, cerebellum, lung, kidney, small intestine and skeletal muscle. Expressed in the renal outer medulla, medullary ray and cortex (at protein level).

It localises to the cell membrane. Its subcellular location is the apical cell membrane. It is found in the synapse. The protein localises to the synaptosome. The protein resides in the early endosome membrane. It localises to the late endosome membrane. Its subcellular location is the recycling endosome membrane. It catalyses the reaction K(+)(in) + L-glutamate(out) + 3 Na(+)(out) + H(+)(out) = K(+)(out) + L-glutamate(in) + 3 Na(+)(in) + H(+)(in). The enzyme catalyses K(+)(in) + L-aspartate(out) + 3 Na(+)(out) + H(+)(out) = K(+)(out) + L-aspartate(in) + 3 Na(+)(in) + H(+)(in). It carries out the reaction D-aspartate(out) + K(+)(in) + 3 Na(+)(out) + H(+)(out) = D-aspartate(in) + K(+)(out) + 3 Na(+)(in) + H(+)(in). The catalysed reaction is K(+)(in) + L-cysteine(out) + 3 Na(+)(out) + H(+)(out) = K(+)(out) + L-cysteine(in) + 3 Na(+)(in) + H(+)(in). Sodium-dependent, high-affinity amino acid transporter that mediates the uptake of L-glutamate and also L-aspartate and D-aspartate. Can also transport L-cysteine. Functions as a symporter that transports one amino acid molecule together with two or three Na(+) ions and one proton, in parallel with the counter-transport of one K(+) ion. Mediates Cl(-) flux that is not coupled to amino acid transport; this avoids the accumulation of negative charges due to aspartate and Na(+) symport. Plays an important role in L-glutamate and L-aspartate reabsorption in renal tubuli. Plays a redundant role in the rapid removal of released glutamate from the synaptic cleft, which is essential for terminating the postsynaptic action of glutamate. Contributes to glutathione biosynthesis and protection against oxidative stress via its role in L-glutamate and L-cysteine transport. Negatively regulated by ARL6IP5. The chain is Excitatory amino acid transporter 3 (Slc1a1) from Mus musculus (Mouse).